We begin with the raw amino-acid sequence, 180 residues long: UPF0134 protein MPN_368 (180 aa).

This sequence belongs to the UPF0134 family.

The sequence is that of UPF0134 protein MPN_368 from Mycoplasma pneumoniae (strain ATCC 29342 / M129 / Subtype 1) (Mycoplasmoides pneumoniae).